We begin with the raw amino-acid sequence, 120 residues long: uncharacterized protein (120 aa).

Transmembrane regions (helical) follow at residues 8-28 and 55-75; these read PFVT…CTLV and FLEN…IGIL.

The protein resides in the membrane. This is an uncharacterized protein from Saccharomyces cerevisiae (strain ATCC 204508 / S288c) (Baker's yeast).